Reading from the N-terminus, the 353-residue chain is Putative ABC transporter ATP-binding protein MG303 homolog (353 aa).

The 241-residue stretch at 72 to 312 folds into the ABC transporter domain; it reads LYFYNLSVFV…MQLLQRYEIT (241 aa). 107–114 is a binding site for ATP; it reads GPSGSGKT.

The protein belongs to the ABC transporter superfamily.

This Mycoplasma pneumoniae (strain ATCC 29342 / M129 / Subtype 1) (Mycoplasmoides pneumoniae) protein is Putative ABC transporter ATP-binding protein MG303 homolog.